Reading from the N-terminus, the 281-residue chain is NADPH-dependent 7-cyano-7-deazaguanine reductase (281 aa).

88-90 (VES) contacts substrate. 90-91 (SK) contributes to the NADPH binding site. C189 functions as the Thioimide intermediate in the catalytic mechanism. Catalysis depends on D196, which acts as the Proton donor. 228–229 (HE) contacts substrate. 257-258 (RG) contacts NADPH.

Belongs to the GTP cyclohydrolase I family. QueF type 2 subfamily. As to quaternary structure, homodimer.

The protein resides in the cytoplasm. The catalysed reaction is 7-aminomethyl-7-carbaguanine + 2 NADP(+) = 7-cyano-7-deazaguanine + 2 NADPH + 3 H(+). The protein operates within tRNA modification; tRNA-queuosine biosynthesis. Catalyzes the NADPH-dependent reduction of 7-cyano-7-deazaguanine (preQ0) to 7-aminomethyl-7-deazaguanine (preQ1). The polypeptide is NADPH-dependent 7-cyano-7-deazaguanine reductase (Cronobacter sakazakii (strain ATCC BAA-894) (Enterobacter sakazakii)).